Consider the following 222-residue polypeptide: Riboflavin kinase (222 aa).

The segment at 1–92 is unknown; it reads MVEAEDLQSL…VRIFNPDQRG (92 aa). The riboflavin kinase stretch occupies residues 93–222; the sequence is YTLTGTVISG…DTIEVEITHD (130 aa). 102 to 107 serves as a coordination point for CDP; the sequence is GLGEGR. Positions 131 and 133 each coordinate Mg(2+). FMN-binding residues include Thr188 and Glu196. Residue 201-204 coordinates CDP; sequence CELR.

It belongs to the archaeal riboflavin kinase family. Requires Mg(2+) as cofactor.

It catalyses the reaction riboflavin + CTP = CDP + FMN + H(+). It functions in the pathway cofactor biosynthesis; FMN biosynthesis; FMN from riboflavin (CTP route): step 1/1. Functionally, catalyzes the CTP-dependent phosphorylation of riboflavin (vitamin B2) to form flavin mononucleotide (FMN). In Methanoculleus marisnigri (strain ATCC 35101 / DSM 1498 / JR1), this protein is Riboflavin kinase (ribK).